Consider the following 336-residue polypeptide: Holliday junction branch migration complex subunit RuvB (336 aa).

A large ATPase domain (RuvB-L) region spans residues Ala4–Tyr184. ATP contacts are provided by residues Ile23, Arg24, Gly65, Lys68, Thr69, Thr70, Glu131–Tyr133, Arg174, Tyr184, and Arg221. Thr69 is a binding site for Mg(2+). The interval Gln185–Asn255 is small ATPAse domain (RuvB-S). Residues Ala258–Pro336 are head domain (RuvB-H). 3 residues coordinate DNA: Arg294, Arg313, and Arg318.

The protein belongs to the RuvB family. As to quaternary structure, homohexamer. Forms an RuvA(8)-RuvB(12)-Holliday junction (HJ) complex. HJ DNA is sandwiched between 2 RuvA tetramers; dsDNA enters through RuvA and exits via RuvB. An RuvB hexamer assembles on each DNA strand where it exits the tetramer. Each RuvB hexamer is contacted by two RuvA subunits (via domain III) on 2 adjacent RuvB subunits; this complex drives branch migration. In the full resolvosome a probable DNA-RuvA(4)-RuvB(12)-RuvC(2) complex forms which resolves the HJ.

The protein localises to the cytoplasm. The catalysed reaction is ATP + H2O = ADP + phosphate + H(+). Functionally, the RuvA-RuvB-RuvC complex processes Holliday junction (HJ) DNA during genetic recombination and DNA repair, while the RuvA-RuvB complex plays an important role in the rescue of blocked DNA replication forks via replication fork reversal (RFR). RuvA specifically binds to HJ cruciform DNA, conferring on it an open structure. The RuvB hexamer acts as an ATP-dependent pump, pulling dsDNA into and through the RuvAB complex. RuvB forms 2 homohexamers on either side of HJ DNA bound by 1 or 2 RuvA tetramers; 4 subunits per hexamer contact DNA at a time. Coordinated motions by a converter formed by DNA-disengaged RuvB subunits stimulates ATP hydrolysis and nucleotide exchange. Immobilization of the converter enables RuvB to convert the ATP-contained energy into a lever motion, pulling 2 nucleotides of DNA out of the RuvA tetramer per ATP hydrolyzed, thus driving DNA branch migration. The RuvB motors rotate together with the DNA substrate, which together with the progressing nucleotide cycle form the mechanistic basis for DNA recombination by continuous HJ branch migration. Branch migration allows RuvC to scan DNA until it finds its consensus sequence, where it cleaves and resolves cruciform DNA. The sequence is that of Holliday junction branch migration complex subunit RuvB from Shigella flexneri serotype 5b (strain 8401).